The following is a 624-amino-acid chain: Steryl-sulfatase (624 aa).

A signal peptide spans 1-22 (MPRPRPLLLAVMAATLADIILA). Residues 24–192 (DPAPAGPAPR…GTVFGPALRV (169 aa)) are Lumenal-facing. Ca(2+)-binding residues include Asp-43 and Asp-44. Asn-55 carries an N-linked (GlcNAc...) asparagine glycan. Ca(2+) is bound at residue Cys-83. The Nucleophile role is filled by Cys-83. At Cys-83 the chain carries 3-oxoalanine (Cys). His-144 is an active-site residue. 2 disulfide bridges follow: Cys-149–Cys-156 and Cys-178–Cys-250. Residues 193-216 (FAAGPLAALGASLAAMAAARWAGL) form a helical membrane-spanning segment. Topologically, residues 217–220 (ARVP) are cytoplasmic. The helical transmembrane segment at 221–242 (GWALAGTAAAMLAVGGPRSASC) threads the bilayer. Residues 243–624 (LGFRPANCFL…ATTRTQATPR (382 aa)) are Lumenal-facing. Residues Asp-350 and His-351 each contribute to the Ca(2+) site. Intrachain disulfides connect Cys-454–Cys-495 and Cys-487–Cys-493. Residue Asn-465 is glycosylated (N-linked (GlcNAc...) asparagine). A disordered region spans residues 572–624 (GGAGGGAGAQDDSGHAHGDGSHAHDDPGHAQDRGDDDAHYGGHATTRTQATPR). Over residues 583–611 (DSGHAHGDGSHAHDDPGHAQDRGDDDAHY) the composition is skewed to basic and acidic residues.

It belongs to the sulfatase family. Homodimer. It depends on Ca(2+) as a cofactor. In terms of processing, the conversion to 3-oxoalanine (also known as C-formylglycine, FGly), of a serine or cysteine residue in prokaryotes and of a cysteine residue in eukaryotes, is critical for catalytic activity.

The protein resides in the microsome membrane. It is found in the endoplasmic reticulum membrane. It catalyses the reaction dehydroepiandrosterone 3-sulfate + H2O = 3beta-hydroxyandrost-5-en-17-one + sulfate + H(+). The enzyme catalyses estrone 3-sulfate + H2O = estrone + sulfate + H(+). In terms of biological role, catalyzes the conversion of sulfated steroid precursors, such as dehydroepiandrosterone sulfate (DHEA-S) and estrone sulfate to the free steroid. This is Steryl-sulfatase (Sts) from Mus musculus (Mouse).